Here is a 262-residue protein sequence, read N- to C-terminus: Glucosamine-6-phosphate deaminase (262 aa).

Asp63 serves as the catalytic Proton acceptor; for enolization step. The For ring-opening step role is filled by Asn129. The active-site Proton acceptor; for ring-opening step is His131. Glu136 serves as the catalytic For ring-opening step.

It belongs to the glucosamine/galactosamine-6-phosphate isomerase family. NagB subfamily.

The catalysed reaction is alpha-D-glucosamine 6-phosphate + H2O = beta-D-fructose 6-phosphate + NH4(+). The protein operates within amino-sugar metabolism; N-acetylneuraminate degradation; D-fructose 6-phosphate from N-acetylneuraminate: step 5/5. Catalyzes the reversible isomerization-deamination of glucosamine 6-phosphate (GlcN6P) to form fructose 6-phosphate (Fru6P) and ammonium ion. The sequence is that of Glucosamine-6-phosphate deaminase from Bacillus cytotoxicus (strain DSM 22905 / CIP 110041 / 391-98 / NVH 391-98).